The primary structure comprises 273 residues: 4-hydroxy-tetrahydrodipicolinate reductase (273 aa).

NAD(+)-binding positions include 12–17 and E38; that span reads GAGGRM. R39 is a binding site for NADP(+). NAD(+)-binding positions include 102 to 104 and 126 to 129; these read GTT and AANF. H159 acts as the Proton donor/acceptor in catalysis. A (S)-2,3,4,5-tetrahydrodipicolinate-binding site is contributed by H160. K163 functions as the Proton donor in the catalytic mechanism. 169–170 provides a ligand contact to (S)-2,3,4,5-tetrahydrodipicolinate; sequence GT.

Belongs to the DapB family. Homotetramer.

The protein localises to the cytoplasm. The enzyme catalyses (S)-2,3,4,5-tetrahydrodipicolinate + NAD(+) + H2O = (2S,4S)-4-hydroxy-2,3,4,5-tetrahydrodipicolinate + NADH + H(+). It carries out the reaction (S)-2,3,4,5-tetrahydrodipicolinate + NADP(+) + H2O = (2S,4S)-4-hydroxy-2,3,4,5-tetrahydrodipicolinate + NADPH + H(+). Its pathway is amino-acid biosynthesis; L-lysine biosynthesis via DAP pathway; (S)-tetrahydrodipicolinate from L-aspartate: step 4/4. Functionally, catalyzes the conversion of 4-hydroxy-tetrahydrodipicolinate (HTPA) to tetrahydrodipicolinate. In Pectobacterium carotovorum subsp. carotovorum (strain PC1), this protein is 4-hydroxy-tetrahydrodipicolinate reductase.